We begin with the raw amino-acid sequence, 320 residues long: Phospho-N-acetylmuramoyl-pentapeptide-transferase (320 aa).

10 consecutive transmembrane segments (helical) span residues 6–26 (FLTPLMSGFVITVIFMPLFIG), 54–74 (MGGLVFIVAAVISSIWVAIWL), 81–101 (LWIALFILVLYGLLGFSDDFI), 117–137 (LAGQILGGAVFLAVYFHEGFS), 145–165 (IGTISSSWFFSLFVIVWLVGF), 175–195 (IDGLVAGLAIVSFATYTIIAF), 200–220 (IDVAIFGLTIIGGLIGFLIFN), 226–246 (IFMGDVGSLALGGALAAMSIL), 251–271 (FSLLLIGLVYVIETASVMLQV), and 300–320 (RIDISFWVFSIICSAIYLLIF).

The protein belongs to the glycosyltransferase 4 family. MraY subfamily. Mg(2+) is required as a cofactor.

Its subcellular location is the cell membrane. It catalyses the reaction UDP-N-acetyl-alpha-D-muramoyl-L-alanyl-gamma-D-glutamyl-L-lysyl-D-alanyl-D-alanine + di-trans,octa-cis-undecaprenyl phosphate = Mur2Ac(oyl-L-Ala-gamma-D-Glu-L-Lys-D-Ala-D-Ala)-di-trans,octa-cis-undecaprenyl diphosphate + UMP. Its pathway is cell wall biogenesis; peptidoglycan biosynthesis. Its function is as follows. Catalyzes the initial step of the lipid cycle reactions in the biosynthesis of the cell wall peptidoglycan: transfers peptidoglycan precursor phospho-MurNAc-pentapeptide from UDP-MurNAc-pentapeptide onto the lipid carrier undecaprenyl phosphate, yielding undecaprenyl-pyrophosphoryl-MurNAc-pentapeptide, known as lipid I. The protein is Phospho-N-acetylmuramoyl-pentapeptide-transferase of Latilactobacillus sakei subsp. sakei (strain 23K) (Lactobacillus sakei subsp. sakei).